We begin with the raw amino-acid sequence, 360 residues long: DNA replication and repair protein RecF (360 aa).

Position 30–37 (30–37 (GQNGSGKT)) interacts with ATP.

The protein belongs to the RecF family.

It localises to the cytoplasm. In terms of biological role, the RecF protein is involved in DNA metabolism; it is required for DNA replication and normal SOS inducibility. RecF binds preferentially to single-stranded, linear DNA. It also seems to bind ATP. The sequence is that of DNA replication and repair protein RecF from Shewanella putrefaciens (strain CN-32 / ATCC BAA-453).